The primary structure comprises 252 residues: Large ribosomal subunit protein uL30 (252 aa).

It belongs to the universal ribosomal protein uL30 family.

In terms of biological role, binds to G-rich structures in 28S rRNA and in mRNAs. Plays a regulatory role in the translation apparatus; inhibits cell-free translation of mRNAs. The sequence is that of Large ribosomal subunit protein uL30 (RpL7) from Drosophila melanogaster (Fruit fly).